Reading from the N-terminus, the 411-residue chain is Protein translocase subunit SecY (411 aa).

Helical transmembrane passes span 11 to 31 (IIFT…PVPG), 52 to 72 (IFSG…VPYI), 111 to 131 (ALGW…PYVF), 135 to 155 (FAFV…IMWL), 163 to 180 (GIGN…VSGL), 197 to 217 (SLKF…TICV), 253 to 273 (VMPI…TQII), 291 to 311 (LYLL…TSIV), 349 to 369 (TFLG…IEKV), and 377 to 397 (GLGA…AKQI).

It belongs to the SecY/SEC61-alpha family. In terms of assembly, component of the plastid Sec protein translocase complex, which is composed of at least SecY, SecE and SecG.

It is found in the plastid. The protein resides in the chloroplast thylakoid membrane. The central subunit of the protein translocation channel SecYE. Consists of two halves formed by TMs 1-5 and 6-10. These two domains form a lateral gate at the front which open onto the bilayer between TMs 2 and 7, and are clamped together by SecE at the back. The channel is closed by both a pore ring composed of hydrophobic SecY resides and a short helix (helix 2A) on the extracellular side of the membrane which forms a plug. This is Protein translocase subunit SecY from Pyropia yezoensis (Susabi-nori).